Consider the following 218-residue polypeptide: Putative transposase InsD for insertion element IS2E (218 aa).

Residues 23–206 (KPAVPPSKRA…SPREYLRQRA (184 aa)) form the Integrase catalytic domain.

Involved in the transposition of the insertion sequence IS2. The polypeptide is Putative transposase InsD for insertion element IS2E (insD8) (Escherichia coli (strain K12)).